We begin with the raw amino-acid sequence, 809 residues long: Mediator of RNA polymerase II transcription subunit 15 (809 aa).

Disordered stretches follow at residues 115–137, 183–211, and 413–549; these read AMQGVAGGQQGAGAAGPMQQMIQ, QLQQHHQNQQMQHQNQQQQQAQNQQQQNQ, and GQMM…ASQS. The span at 119 to 128 shows a compositional bias: gly residues; that stretch reads VAGGQQGAGA. The span at 446–467 shows a compositional bias: low complexity; the sequence is QQMPQAQQMMSSPSPVQVQTPQ. Over residues 468 to 484 the composition is skewed to pro residues; sequence SMPPPPQPQPSPQPPSS. Composition is skewed to low complexity over residues 485–502 and 510–520; these read QPNSVSSGPTPSPGGFQP and QSPASSRTPQS. The segment covering 533–549 has biased composition (polar residues); that stretch reads TPGNPSSVMSPAGASQS.

It belongs to the Mediator complex subunit 15 family. In terms of assembly, component of the Mediator complex. Interacts with srebf1 and srebf2. Interacts with smad2, smad3 and smad4.

The protein resides in the cytoplasm. It localises to the nucleus. Component of the Mediator complex, a coactivator involved in the regulated transcription of nearly all RNA polymerase II-dependent genes. Mediator functions as a bridge to convey information from gene-specific regulatory proteins to the basal RNA polymerase II transcription machinery. Mediator is recruited to promoters by direct interactions with regulatory proteins and serves as a scaffold for the assembly of a functional preinitiation complex with RNA polymerase II and the general transcription factors. Required for cholesterol-dependent gene regulation. Positively regulates the Nodal signaling pathway. In Danio rerio (Zebrafish), this protein is Mediator of RNA polymerase II transcription subunit 15 (med15).